A 320-amino-acid chain; its full sequence is NAC domain-containing protein 18 (320 aa).

The disordered stretch occupies residues M1–R22. The span at G9–P18 shows a compositional bias: pro residues. Residues L17–K177 form the NAC domain. The DNA-binding element occupies V118–S183.

As to expression, restricted primarily to the region of the embryo including the SAM. Expressed in the outer integument, but seems not expressed in the embryo at the torpedo stage.

It localises to the nucleus. Functionally, may encode a transcription factor involved in the elaboration of shoot apical meristems (SAM). Together with NAC056/NARS1, regulates embryogenesis by regulating the development and degeneration of ovule integuments, a process required for intertissue communication between the embryo and the maternal integument. In Arabidopsis thaliana (Mouse-ear cress), this protein is NAC domain-containing protein 18 (NAC018).